A 152-amino-acid polypeptide reads, in one-letter code: Arginine repressor (152 aa).

It belongs to the ArgR family.

Its subcellular location is the cytoplasm. Its pathway is amino-acid biosynthesis; L-arginine biosynthesis [regulation]. In terms of biological role, regulates arginine biosynthesis genes. This is Arginine repressor from Thermotoga sp. (strain RQ2).